A 150-amino-acid polypeptide reads, in one-letter code: MTGIRISVQTLPHFEGLSLPRYMSEHAAGMDICAAVADEVVILPGERALIPTGIAIALPEGFEAQIRPRSGLALKHGVTLVNAPGTIDADYRGEIGVLLINHGNDPFVVARGSRVAQMVIAPVCRVAWSESGSLETTTRGDGGFGHTDES.

Residues 69-71 (RSG), Asn82, and 86-88 (TID) contribute to the substrate site.

The protein belongs to the dUTPase family. It depends on Mg(2+) as a cofactor.

The catalysed reaction is dUTP + H2O = dUMP + diphosphate + H(+). It functions in the pathway pyrimidine metabolism; dUMP biosynthesis; dUMP from dCTP (dUTP route): step 2/2. In terms of biological role, this enzyme is involved in nucleotide metabolism: it produces dUMP, the immediate precursor of thymidine nucleotides and it decreases the intracellular concentration of dUTP so that uracil cannot be incorporated into DNA. This Syntrophus aciditrophicus (strain SB) protein is Deoxyuridine 5'-triphosphate nucleotidohydrolase.